A 264-amino-acid chain; its full sequence is Molybdenum transport system permease protein ModB (264 aa).

Helical transmembrane passes span 11 to 31, 57 to 77, 90 to 110, 127 to 147, 176 to 196, and 234 to 254; these read VYLP…AIAI, TAAA…LVLA, LILL…LYAF, IAFS…PYLV, WWRV…VLAF, and AAVA…LGVG. An ABC transmembrane type-1 domain is found at 51–253; the sequence is LLLSVKTAAA…VVAALVVLGV (203 aa).

This sequence belongs to the binding-protein-dependent transport system permease family. CysTW subfamily.

The protein localises to the cell membrane. Part of the binding-protein-dependent transport system ModABCD for molybdenum; probably responsible for the translocation of the substrate across the membrane. The chain is Molybdenum transport system permease protein ModB (modB) from Mycobacterium bovis (strain ATCC BAA-935 / AF2122/97).